The primary structure comprises 237 residues: Purine nucleoside phosphorylase DeoD-type (237 aa).

His4 contacts a purine D-ribonucleoside. Residues Gly20, Arg24, Arg43, and 87-90 (RVGT) each bind phosphate. Residues 179-181 (EME) and 203-204 (SD) contribute to the a purine D-ribonucleoside site. The Proton donor role is filled by Asp204.

Belongs to the PNP/UDP phosphorylase family. Homohexamer; trimer of homodimers.

It catalyses the reaction a purine D-ribonucleoside + phosphate = a purine nucleobase + alpha-D-ribose 1-phosphate. The catalysed reaction is a purine 2'-deoxy-D-ribonucleoside + phosphate = a purine nucleobase + 2-deoxy-alpha-D-ribose 1-phosphate. Its function is as follows. Catalyzes the reversible phosphorolytic breakdown of the N-glycosidic bond in the beta-(deoxy)ribonucleoside molecules, with the formation of the corresponding free purine bases and pentose-1-phosphate. The sequence is that of Purine nucleoside phosphorylase DeoD-type from Streptococcus pyogenes serotype M12 (strain MGAS2096).